Reading from the N-terminus, the 359-residue chain is Mitochondrial glutathione transporter SLC25A39 (359 aa).

The Mitochondrial intermembrane portion of the chain corresponds to 1-18 (MGDRPAVRISAAITPVQQ). Solcar repeat units follow at residues 13-149 (ITPV…LRDF), 157-241 (HGDH…VKAQ), and 251-346 (ASFT…GKTF). A helical membrane pass occupies residues 19–39 (MLASGTGAVLTSLFVTPLDVV). The Mitochondrial matrix portion of the chain corresponds to 40–119 (KIRLQAQQTP…VKITHNEGLR (80 aa)). Residues Cys72, Cys76, Cys86, and Cys92 each contribute to the [2Fe-2S] cluster site. Residues 120–140 (SLWSGLPPTLVMAVPATVIYF) traverse the membrane as a helical segment. Residues 141 to 162 (TCYDQLRDFLCYSMGYHGDHIP) lie on the Mitochondrial intermembrane side of the membrane. The chain crosses the membrane as a helical span at residues 163 to 183 (LIAGGLARLGAVSVISPLELV). Residues 184–212 (RTKMQSRRLQYSELMVCIRSSVAQDGWLS) are Mitochondrial matrix-facing. Residues 213–233 (LWRGWGPTVLRDVPFSALYWF) traverse the membrane as a helical segment. Residues 234-253 (NYELVKAQLCEHYRTPQASF) lie on the Mitochondrial intermembrane side of the membrane. Residues 254-274 (TISFTAGAVSGAIAAVLTLPF) form a helical membrane-spanning segment. The Mitochondrial matrix segment spans residues 275-316 (DVVKTRRQIQLGEMEALGAVSMKKPSSTWNMMRNIWIDMGYK). A helical transmembrane segment spans residues 317–337 (GLFAGFLPRVIKVAPACAVMI). Topologically, residues 338 to 359 (STYEFGKTFFQERNLHQARCGL) are mitochondrial intermembrane.

This sequence belongs to the mitochondrial carrier (TC 2.A.29) family. Post-translationally, cleaved and degraded by AFG3L2; degradation by AFG3L2 is regulated by the ability of SLC25A39 to bind iron-sulfur. In absence of mitochondrial glutathione, SLC25A39 binds iron-sulfur, preventing cleavage and degradation by AFG3L2. The presence of mitochondrial glutathione prevents iron-sulfur-binding to SLC25A39, promoting cleavage and degradation by AFG3L2.

The protein localises to the mitochondrion inner membrane. The enzyme catalyses glutathione(in) = glutathione(out). Its activity is regulated as follows. The activity of SLC25A39 is regulated by levels of mitochondrial glutathione via its ability to bind [2Fe-2S] iron-sulfur cluster. Upon physiological levels of mitochondrial glutathione, glutathione prevents iron-sulfur-binding to SLC25A39 promoting cleavage and degradation by AFG3L2. Upon depletion of mitochondrial glutathione, SLC25A39 binds iron-sulfur, preventing cleavage and degradation by AFG3L2. Mitochondrial transporter required for glutathione import into mitochondria. Glutathione, which plays key roles in oxidative metabolism, is produced exclusively in the cytosol and is imported in many organelles. Mitochondrial glutathione is required for the activity and stability of proteins containing iron-sulfur clusters, as well as erythropoiesis. Involved in the early steps of heme biosynthesis. The chain is Mitochondrial glutathione transporter SLC25A39 (slc25a39) from Danio rerio (Zebrafish).